The following is a 510-amino-acid chain: MAEADFKMVSEPVAHGVAEEEMASSTSDSGEESDSSSSSSSTSGSSSSSSTSGSSSSSGSGSSSSSSGSGSTSSRSRLYRKKRVPEPSRRARRAPLGTNFVDRLPQAVRNRVQALRNIQDECDKVDTLFLKAIHDLERKYAELNKPLYDRRFQIINAEYEPTEEECEWNSEDEEFSSDEEVQDNTPSEMPPLEGEEEENPKENPEVKAEEKEVPKEIPEVKDEEKEVPKEIPQVKAEEKADSKDCMEATPEVNEDPKEAPQVKADDKEQPKATEAKARAAVREAHKRVPEERLQDSVDLKRARKGKPKREDPKGIPDYWLIVLKNVDKLGPMIQKYDEPILKFLSDVSLKFSKPGQPVSYTFEFHFLPNPYFRNEVLVKTYIIKSKPDHNDPFFSWGWEIEDCEGCKIDWRRGKDVTVTTTQSRTTATGEIEIQPRVVPNASFFNFFSPPEIPMIGKLEPREDAILDEDFEIGQILHDNVILKSVYYYTGEVNGTYYQFGKHYGNKKYRK.

Disordered regions lie at residues 1-99 (MAEA…LGTN) and 161-311 (PTEE…KRED). Over residues 35-74 (SSSSSSSTSGSSSSSSTSGSSSSSGSGSSSSSSGSGSTSS) the composition is skewed to low complexity. Acidic residues predominate over residues 161-182 (PTEEECEWNSEDEEFSSDEEVQ). Composition is skewed to basic and acidic residues over residues 200–229 (PKEN…EVPK), 235–246 (KAEEKADSKDCM), and 254–300 (EDPK…VDLK).

This sequence belongs to the nucleosome assembly protein (NAP) family.

It is found in the nucleus. The sequence is that of Nucleosome assembly protein 1-like 3 (NAP1L3) from Pongo abelii (Sumatran orangutan).